We begin with the raw amino-acid sequence, 151 residues long: D-aminoacyl-tRNA deacylase (151 aa).

Residues 137–138 (GP) carry the Gly-cisPro motif, important for rejection of L-amino acids motif.

The protein belongs to the DTD family. Homodimer.

It is found in the cytoplasm. It carries out the reaction glycyl-tRNA(Ala) + H2O = tRNA(Ala) + glycine + H(+). The enzyme catalyses a D-aminoacyl-tRNA + H2O = a tRNA + a D-alpha-amino acid + H(+). An aminoacyl-tRNA editing enzyme that deacylates mischarged D-aminoacyl-tRNAs. Also deacylates mischarged glycyl-tRNA(Ala), protecting cells against glycine mischarging by AlaRS. Acts via tRNA-based rather than protein-based catalysis; rejects L-amino acids rather than detecting D-amino acids in the active site. By recycling D-aminoacyl-tRNA to D-amino acids and free tRNA molecules, this enzyme counteracts the toxicity associated with the formation of D-aminoacyl-tRNA entities in vivo and helps enforce protein L-homochirality. The sequence is that of D-aminoacyl-tRNA deacylase from Solibacter usitatus (strain Ellin6076).